Here is a 262-residue protein sequence, read N- to C-terminus: Triosephosphate isomerase (262 aa).

13–15 (NWK) provides a ligand contact to substrate. Histidine 103 serves as the catalytic Electrophile. The Proton acceptor role is filled by glutamate 175. Residues glycine 181, serine 221, and 242-243 (GG) each bind substrate.

Belongs to the triosephosphate isomerase family. Homodimer.

The protein localises to the cytoplasm. The catalysed reaction is D-glyceraldehyde 3-phosphate = dihydroxyacetone phosphate. It participates in carbohydrate biosynthesis; gluconeogenesis. Its pathway is carbohydrate degradation; glycolysis; D-glyceraldehyde 3-phosphate from glycerone phosphate: step 1/1. Its function is as follows. Involved in the gluconeogenesis. Catalyzes stereospecifically the conversion of dihydroxyacetone phosphate (DHAP) to D-glyceraldehyde-3-phosphate (G3P). This Corynebacterium efficiens (strain DSM 44549 / YS-314 / AJ 12310 / JCM 11189 / NBRC 100395) protein is Triosephosphate isomerase.